A 930-amino-acid chain; its full sequence is Alanine--tRNA ligase (930 aa).

Zn(2+) is bound by residues H595, H599, C700, and H704.

Belongs to the class-II aminoacyl-tRNA synthetase family. It depends on Zn(2+) as a cofactor.

It is found in the cytoplasm. The enzyme catalyses tRNA(Ala) + L-alanine + ATP = L-alanyl-tRNA(Ala) + AMP + diphosphate. Its function is as follows. Catalyzes the attachment of alanine to tRNA(Ala) in a two-step reaction: alanine is first activated by ATP to form Ala-AMP and then transferred to the acceptor end of tRNA(Ala). Also edits incorrectly charged Ser-tRNA(Ala) and Gly-tRNA(Ala) via its editing domain. This Malacoplasma penetrans (strain HF-2) (Mycoplasma penetrans) protein is Alanine--tRNA ligase.